Consider the following 759-residue polypeptide: Protein hunchback (759 aa).

2 disordered regions span residues 30-51 and 171-215; these read EPGH…PIPS and SSEK…EDMK. Positions 39–51 are enriched in polar residues; it reads SVASSPRQSPIPS. Threonine 179 bears the Phosphothreonine mark. A phosphoserine mark is found at serine 189, serine 208, serine 210, and serine 211. A compositionally biased stretch (basic and acidic residues) spans 199–215; it reads EPEKEHDQMSNSSEDMK. C2H2-type zinc fingers lie at residues 241–263, 270–292, 298–320, and 326–350; these read YKCK…TRTH, LQCP…IRKH, FQCD…RKSH, and YRCA…KYGH. Disordered stretches follow at residues 366–419, 513–565, and 606–696; these read LVID…TSQL, QLQQ…PQQP, and MTSP…APAS. Low complexity-rich tracts occupy residues 399–419 and 513–522; these read VAAV…TSQL and QLQQQNQQQS. The span at 523–532 shows a compositional bias: acidic residues; the sequence is DNEEEEQDDE. A phosphoserine mark is found at serine 537 and serine 540. The span at 655 to 696 shows a compositional bias: low complexity; sequence ANTSASSTASSSGNSSNASSNGNSSSNSSSNGTSSAAAAPAS. C2H2-type zinc fingers lie at residues 706–728 and 734–758; these read YECK…MGYH and FKCN…RNAH.

The protein belongs to the hunchback C2H2-type zinc-finger protein family.

The protein resides in the nucleus. Its function is as follows. Gap class segmentation protein that controls development of head structures. This is Protein hunchback from Drosophila yakuba (Fruit fly).